Reading from the N-terminus, the 230-residue chain is DNA repair protein rdl1 (230 aa).

As to quaternary structure, interacts with rlp1 and sws1.

The protein localises to the cytoplasm. It is found in the nucleus. Its function is as follows. Involved in homologous recombination where it functions at an early stage of recombination in a pre-recombinogenic complex with rlp1 and sws1. Also has a role at a later stage of recombination in association with the rhp55-rhp57 complex. The sequence is that of DNA repair protein rdl1 (rdl1) from Schizosaccharomyces pombe (strain 972 / ATCC 24843) (Fission yeast).